The sequence spans 216 residues: Probable nicotinate-nucleotide adenylyltransferase (216 aa).

This sequence belongs to the NadD family.

The enzyme catalyses nicotinate beta-D-ribonucleotide + ATP + H(+) = deamido-NAD(+) + diphosphate. It participates in cofactor biosynthesis; NAD(+) biosynthesis; deamido-NAD(+) from nicotinate D-ribonucleotide: step 1/1. Catalyzes the reversible adenylation of nicotinate mononucleotide (NaMN) to nicotinic acid adenine dinucleotide (NaAD). This chain is Probable nicotinate-nucleotide adenylyltransferase, found in Maridesulfovibrio salexigens (strain ATCC 14822 / DSM 2638 / NCIMB 8403 / VKM B-1763) (Desulfovibrio salexigens).